Here is a 439-residue protein sequence, read N- to C-terminus: Ribosomal protein uS12 methylthiotransferase RimO (439 aa).

In terms of domain architecture, MTTase N-terminal spans 7–119 (KQLCLISLGC…IDIMIAKKQN (113 aa)). [4Fe-4S] cluster-binding residues include cysteine 16, cysteine 50, cysteine 82, cysteine 151, cysteine 155, and cysteine 158. One can recognise a Radical SAM core domain in the interval 137–365 (TGSSVHAYVK…NKIALKHQNN (229 aa)).

The protein belongs to the methylthiotransferase family. RimO subfamily. [4Fe-4S] cluster serves as cofactor.

It is found in the cytoplasm. It catalyses the reaction L-aspartate(89)-[ribosomal protein uS12]-hydrogen + (sulfur carrier)-SH + AH2 + 2 S-adenosyl-L-methionine = 3-methylsulfanyl-L-aspartate(89)-[ribosomal protein uS12]-hydrogen + (sulfur carrier)-H + 5'-deoxyadenosine + L-methionine + A + S-adenosyl-L-homocysteine + 2 H(+). Catalyzes the methylthiolation of an aspartic acid residue of ribosomal protein uS12. This Helicobacter pylori (strain Shi470) protein is Ribosomal protein uS12 methylthiotransferase RimO.